We begin with the raw amino-acid sequence, 690 residues long: Methionine--tRNA ligase (690 aa).

The 'HIGH' region signature appears at 13-23; that stretch reads PYANGQIHIGH. Zn(2+) contacts are provided by cysteine 144, cysteine 147, cysteine 157, and cysteine 160. The 'KMSKS' region motif lies at 335–339; it reads KMSKS. Lysine 338 provides a ligand contact to ATP. A tRNA-binding domain is found at 584–690; sequence DFAKIDLRVA…SGAVPGMRIR (107 aa).

This sequence belongs to the class-I aminoacyl-tRNA synthetase family. MetG type 1 subfamily. Homodimer. It depends on Zn(2+) as a cofactor.

It is found in the cytoplasm. It carries out the reaction tRNA(Met) + L-methionine + ATP = L-methionyl-tRNA(Met) + AMP + diphosphate. Functionally, is required not only for elongation of protein synthesis but also for the initiation of all mRNA translation through initiator tRNA(fMet) aminoacylation. The polypeptide is Methionine--tRNA ligase (Cupriavidus metallidurans (strain ATCC 43123 / DSM 2839 / NBRC 102507 / CH34) (Ralstonia metallidurans)).